The chain runs to 962 residues: Splicing regulator ARVCF (962 aa).

Residues Ser8–Gln46 are a coiled coil. The tract at residues Thr95–Thr122 is disordered. Residues Thr102 and Thr104 each carry the phosphothreonine modification. Polar residues predominate over residues Thr102–Asp114. At Arg170 the chain carries Omega-N-methylarginine. Disordered regions lie at residues Gly186 to Arg253 and Arg266 to Pro290. Residues Arg206–Pro217 show a composition bias toward low complexity. The residue at position 267 (Ser267) is a Phosphoserine. Acidic residues predominate over residues Ala270 to Pro280. 4 positions are modified to phosphoserine: Ser332, Ser335, Ser343, and Ser345. ARM repeat units lie at residues Ser348–Phe387, Glu390–Tyr429, Thr433–Thr467, Leu468–Ser508, Leu526–Asn565, and Met575–Ala622. The interval Asp590–Ala614 is disordered. Ser606 carries the phosphoserine modification. The Nuclear localization signal motif lies at Gln607 to Lys623. Thr642 bears the Phosphothreonine mark. ARM repeat units lie at residues Pro646–Ala686, Thr699–Leu738, Asp739–Asn781, and Thr782–Leu826. Residues Val776–Val962 form a required for interaction with RNA-binding proteins DDX5, HNRNPH2 and SRSF1 and with mRNAs region. The tract at residues Ala854–Val962 is disordered. Phosphoserine is present on residues Ser864 and Ser871. At Thr872 the chain carries Phosphothreonine. Positions Lys878–Ser887 are enriched in basic and acidic residues. A Phosphoserine modification is found at Ser915. Over residues Ala920–Arg932 the composition is skewed to basic and acidic residues.

It belongs to the beta-catenin family. Component of a ribonucleoprotein complex containing mRNAs and RNA-binding proteins including DDX5, HNRNPH2 and SRSF1 as well as ARVCF. Interacts (via the extreme C-terminus) with FRMPD2 (via the PDZ 2 domain). Interacts with CCDC85B. Found in all the examined tissues including heart, brain, liver and kidney. Found at low level in lung. Expressed in dermal connective tissue, salivary gland duct and in the corneal layer (at protein level). Expressed in arrector pili muscle (at protein level). High levels detected in epithelial cells with lower levels found in fibroblasts and T lymphocytes.

The protein resides in the cell junction. It is found in the adherens junction. It localises to the nucleus. The protein localises to the cytoplasm. Functionally, contributes to the regulation of alternative splicing of pre-mRNAs. This is Splicing regulator ARVCF from Homo sapiens (Human).